A 450-amino-acid chain; its full sequence is Na(+)/H(+) antiporter NhaA 2 (450 aa).

A run of 12 helical transmembrane segments spans residues 43-63 (VGGA…NSPW), 86-106 (LTLG…VVGL), 124-144 (ALPM…FVAV), 155-175 (GWAI…AVIS), 185-205 (FLLT…AVFY), 208-228 (EINL…ALCV), 234-254 (SWWL…ESGV), 258-278 (VAGV…AGGP), 299-319 (VAVP…VSGL), 326-346 (PITL…IFLT), 364-384 (WIDV…SLLI), and 398-418 (FVKV…AVLL).

It belongs to the NhaA Na(+)/H(+) (TC 2.A.33) antiporter family.

It is found in the cell membrane. The enzyme catalyses Na(+)(in) + 2 H(+)(out) = Na(+)(out) + 2 H(+)(in). Its function is as follows. Na(+)/H(+) antiporter that extrudes sodium in exchange for external protons. This is Na(+)/H(+) antiporter NhaA 2 from Mycobacterium sp. (strain JLS).